The following is a 333-amino-acid chain: NADH-quinone oxidoreductase subunit H (333 aa).

8 helical membrane passes run 17-37, 91-111, 116-136, 156-176, 188-208, 244-264, 272-292, and 310-330; these read VIQA…MSFI, VAMA…TLGV, IGLL…LFGG, ISYE…AGSF, MWFI…GVAV, YVNI…GWLA, FIPP…MFVL, and WKVC…VILM.

This sequence belongs to the complex I subunit 1 family. In terms of assembly, NDH-1 is composed of 14 different subunits. Subunits NuoA, H, J, K, L, M, N constitute the membrane sector of the complex.

It localises to the cell inner membrane. It carries out the reaction a quinone + NADH + 5 H(+)(in) = a quinol + NAD(+) + 4 H(+)(out). In terms of biological role, NDH-1 shuttles electrons from NADH, via FMN and iron-sulfur (Fe-S) centers, to quinones in the respiratory chain. The immediate electron acceptor for the enzyme in this species is believed to be ubiquinone. Couples the redox reaction to proton translocation (for every two electrons transferred, four hydrogen ions are translocated across the cytoplasmic membrane), and thus conserves the redox energy in a proton gradient. This subunit may bind ubiquinone. In Acinetobacter baylyi (strain ATCC 33305 / BD413 / ADP1), this protein is NADH-quinone oxidoreductase subunit H.